We begin with the raw amino-acid sequence, 55 residues long: Large ribosomal subunit protein bL33 (55 aa).

It belongs to the bacterial ribosomal protein bL33 family.

This Chelativorans sp. (strain BNC1) protein is Large ribosomal subunit protein bL33.